We begin with the raw amino-acid sequence, 232 residues long: Large ribosomal subunit protein uL1 (232 aa).

Belongs to the universal ribosomal protein uL1 family. In terms of assembly, part of the 50S ribosomal subunit.

Functionally, binds directly to 23S rRNA. The L1 stalk is quite mobile in the ribosome, and is involved in E site tRNA release. In terms of biological role, protein L1 is also a translational repressor protein, it controls the translation of the L11 operon by binding to its mRNA. In Stenotrophomonas maltophilia (strain K279a), this protein is Large ribosomal subunit protein uL1.